The chain runs to 640 residues: Chaperone protein HtpG (640 aa).

The tract at residues 1-352 is a; substrate-binding; sequence MTEQTATQNY…SADLPLNVSR (352 aa). The segment at 353 to 571 is b; sequence ELLQESRDVK…DGELSPQLIR (219 aa). Residues 572-640 form a c region; it reads MLKQAGQAVP…VKRINSLLLK (69 aa).

This sequence belongs to the heat shock protein 90 family. As to quaternary structure, homodimer.

The protein localises to the cytoplasm. Functionally, molecular chaperone. Has ATPase activity. The polypeptide is Chaperone protein HtpG (Acinetobacter baylyi (strain ATCC 33305 / BD413 / ADP1)).